Here is a 402-residue protein sequence, read N- to C-terminus: Flavohemoprotein (402 aa).

The Globin domain maps to 1–136; sequence MLSEKTIEIV…IADAFISIEA (136 aa). Residue H85 participates in heme b binding. Catalysis depends on charge relay system residues Y95 and E135. A reductase region spans residues 147 to 402; it reads GGWKDFRNFV…EFFGPAASLQ (256 aa). Positions 150 to 260 constitute an FAD-binding FR-type domain; sequence KDFRNFVVVK…SAPAGDFVLN (111 aa). FAD contacts are provided by residues Y188 and 204-207; that span reads RQYS. 273 to 278 is an NADP(+) binding site; sequence GVGITP. Residue 394-397 participates in FAD binding; sequence FFGP.

It belongs to the globin family. Two-domain flavohemoproteins subfamily. This sequence in the C-terminal section; belongs to the flavoprotein pyridine nucleotide cytochrome reductase family. It depends on heme b as a cofactor. The cofactor is FAD.

The catalysed reaction is 2 nitric oxide + NADPH + 2 O2 = 2 nitrate + NADP(+) + H(+). It carries out the reaction 2 nitric oxide + NADH + 2 O2 = 2 nitrate + NAD(+) + H(+). Its function is as follows. Is involved in NO detoxification in an aerobic process, termed nitric oxide dioxygenase (NOD) reaction that utilizes O(2) and NAD(P)H to convert NO to nitrate, which protects the bacterium from various noxious nitrogen compounds. Therefore, plays a central role in the inducible response to nitrosative stress. The protein is Flavohemoprotein of Bacillus thuringiensis subsp. konkukian (strain 97-27).